A 343-amino-acid polypeptide reads, in one-letter code: Uroporphyrinogen decarboxylase (343 aa).

Substrate contacts are provided by residues 26-30 (RQAGR), aspartate 75, tyrosine 150, serine 205, and histidine 319.

The protein belongs to the uroporphyrinogen decarboxylase family. In terms of assembly, homodimer.

The protein localises to the cytoplasm. The catalysed reaction is uroporphyrinogen III + 4 H(+) = coproporphyrinogen III + 4 CO2. It participates in porphyrin-containing compound metabolism; protoporphyrin-IX biosynthesis; coproporphyrinogen-III from 5-aminolevulinate: step 4/4. Functionally, catalyzes the decarboxylation of four acetate groups of uroporphyrinogen-III to yield coproporphyrinogen-III. In Syntrophotalea carbinolica (strain DSM 2380 / NBRC 103641 / GraBd1) (Pelobacter carbinolicus), this protein is Uroporphyrinogen decarboxylase.